The sequence spans 239 residues: Ribosomal RNA small subunit methyltransferase G (239 aa).

Residues glycine 77, phenylalanine 82, 128–129, and arginine 147 contribute to the S-adenosyl-L-methionine site; that span reads AE.

The protein belongs to the methyltransferase superfamily. RNA methyltransferase RsmG family.

It localises to the cytoplasm. In terms of biological role, specifically methylates the N7 position of guanine in position 535 of 16S rRNA. The sequence is that of Ribosomal RNA small subunit methyltransferase G from Bacillus cereus (strain ZK / E33L).